A 336-amino-acid polypeptide reads, in one-letter code: N-acetyl-gamma-glutamyl-phosphate reductase (336 aa).

Cys-148 is a catalytic residue.

Belongs to the NAGSA dehydrogenase family. Type 1 subfamily.

It is found in the cytoplasm. The catalysed reaction is N-acetyl-L-glutamate 5-semialdehyde + phosphate + NADP(+) = N-acetyl-L-glutamyl 5-phosphate + NADPH + H(+). It participates in amino-acid biosynthesis; L-arginine biosynthesis; N(2)-acetyl-L-ornithine from L-glutamate: step 3/4. Catalyzes the NADPH-dependent reduction of N-acetyl-5-glutamyl phosphate to yield N-acetyl-L-glutamate 5-semialdehyde. In Campylobacter curvus (strain 525.92), this protein is N-acetyl-gamma-glutamyl-phosphate reductase.